Reading from the N-terminus, the 315-residue chain is Glycine--tRNA ligase alpha subunit (315 aa).

The protein belongs to the class-II aminoacyl-tRNA synthetase family. As to quaternary structure, tetramer of two alpha and two beta subunits.

Its subcellular location is the cytoplasm. It carries out the reaction tRNA(Gly) + glycine + ATP = glycyl-tRNA(Gly) + AMP + diphosphate. In Pseudomonas syringae pv. tomato (strain ATCC BAA-871 / DC3000), this protein is Glycine--tRNA ligase alpha subunit.